A 91-amino-acid chain; its full sequence is UPF0223 protein SAR1071 (91 aa).

The protein belongs to the UPF0223 family.

The chain is UPF0223 protein SAR1071 from Staphylococcus aureus (strain MRSA252).